The primary structure comprises 577 residues: Arginine--tRNA ligase (577 aa).

The short motif at 122 to 132 (PNVAKEMHVGH) is the 'HIGH' region element.

Belongs to the class-I aminoacyl-tRNA synthetase family. As to quaternary structure, monomer.

The protein resides in the cytoplasm. The catalysed reaction is tRNA(Arg) + L-arginine + ATP = L-arginyl-tRNA(Arg) + AMP + diphosphate. This Haemophilus influenzae (strain 86-028NP) protein is Arginine--tRNA ligase.